The following is a 515-amino-acid chain: MQHDNKVIILDFGSQFTQLIARRIREAGVYSEIHPCNVDPQKIKDLNPGALILSGGPSSVLEDESPQLDPSLLELGVPVLGICYGMQLMTNDLGGRVVSSEDREYGRAEFKGDSSCTIFEGIEDIEKLTVWMSHGDRVEAIPEGFKVCGTTESIPFAAMANEEKKMYALQFHPEVAHTESGTTIINNFVFKVAGLKADWTMSSFVENCIEEMREKIGDNQVVLGLSGGIDSTVVAVLLHKAIGKRLHCIFVDNGLLRMHEREEVIGFLEEHFELNVKCVDSAELFLDKLKGVEDPEKKRKLIGYTFIDVFNEEASALKDVKFLAQGTLYPDVIESESFKGPSAVIKSHHNVGGLPEDMDLDLVEPLRELFKDEVRKVAYELGLPEFIIWRQPFPGPGLAIRVLGEITEERLEILRQADKIVQNEMHASGWYRKVWQGFAVLLPLKTVGVMGDDRTYEHVIALRIVDSIDAMTADWSRIPNDILARMSNRIINEVKGVNRVVLDISSKPPATIEWE.

The 193-residue stretch at 6 to 198 folds into the Glutamine amidotransferase type-1 domain; sequence KVIILDFGSQ…VFKVAGLKAD (193 aa). The Nucleophile role is filled by C83. Active-site residues include H172 and E174. A GMPS ATP-PPase domain is found at 199–390; it reads WTMSSFVENC…LGLPEFIIWR (192 aa). Position 226 to 232 (226 to 232) interacts with ATP; that stretch reads SGGIDST.

In terms of assembly, homodimer.

It carries out the reaction XMP + L-glutamine + ATP + H2O = GMP + L-glutamate + AMP + diphosphate + 2 H(+). Its pathway is purine metabolism; GMP biosynthesis; GMP from XMP (L-Gln route): step 1/1. Functionally, catalyzes the synthesis of GMP from XMP. This Maridesulfovibrio salexigens (strain ATCC 14822 / DSM 2638 / NCIMB 8403 / VKM B-1763) (Desulfovibrio salexigens) protein is GMP synthase [glutamine-hydrolyzing].